Here is a 215-residue protein sequence, read N- to C-terminus: Adenylate kinase (215 aa).

10–15 contacts ATP; sequence GAGKGT. Residues 30–58 form an NMP region; the sequence is STGDMLREAKRSGTLEKRYLDIMDSGGLL. Residues Thr-31, Arg-36, 56-58, 84-87, and Gln-91 contribute to the AMP site; these read GLL and GFPR. Positions 128-158 are LID; the sequence is HRRTDKRSGQIYHLVYNPPPPGAELEHRADD. ATP-binding positions include Arg-129 and 138-139; that span reads IY. AMP contacts are provided by Arg-155 and Arg-166. Residue Gly-194 coordinates ATP.

This sequence belongs to the adenylate kinase family. In terms of assembly, monomer.

It localises to the cytoplasm. The enzyme catalyses AMP + ATP = 2 ADP. It functions in the pathway purine metabolism; AMP biosynthesis via salvage pathway; AMP from ADP: step 1/1. In terms of biological role, catalyzes the reversible transfer of the terminal phosphate group between ATP and AMP. Plays an important role in cellular energy homeostasis and in adenine nucleotide metabolism. This chain is Adenylate kinase, found in Sorangium cellulosum (strain So ce56) (Polyangium cellulosum (strain So ce56)).